The primary structure comprises 381 residues: Protein YkfC (381 aa).

In terms of domain architecture, Reverse transcriptase spans 72–337; it reads LRDELLSGHY…DGFIFLGHRL (266 aa). The Mg(2+) site is built by D166, D284, and D285.

It belongs to the bacterial reverse transcriptase family.

This chain is Protein YkfC (ykfC), found in Escherichia coli (strain K12).